A 211-amino-acid polypeptide reads, in one-letter code: Small ribosomal subunit protein uS3 (211 aa).

The KH type-2 domain occupies 38–106 (LRSFVKKTFH…DVELHIVEVK (69 aa)).

The protein belongs to the universal ribosomal protein uS3 family. As to quaternary structure, part of the 30S ribosomal subunit. Forms a tight complex with proteins S10 and S14.

Its function is as follows. Binds the lower part of the 30S subunit head. Binds mRNA in the 70S ribosome, positioning it for translation. The protein is Small ribosomal subunit protein uS3 of Anaplasma marginale (strain Florida).